A 263-amino-acid polypeptide reads, in one-letter code: Acyl-[acyl-carrier-protein]--UDP-N-acetylglucosamine O-acyltransferase (263 aa).

This sequence belongs to the transferase hexapeptide repeat family. LpxA subfamily. Homotrimer.

It is found in the cytoplasm. The catalysed reaction is a (3R)-hydroxyacyl-[ACP] + UDP-N-acetyl-alpha-D-glucosamine = a UDP-3-O-[(3R)-3-hydroxyacyl]-N-acetyl-alpha-D-glucosamine + holo-[ACP]. It functions in the pathway glycolipid biosynthesis; lipid IV(A) biosynthesis; lipid IV(A) from (3R)-3-hydroxytetradecanoyl-[acyl-carrier-protein] and UDP-N-acetyl-alpha-D-glucosamine: step 1/6. Its function is as follows. Involved in the biosynthesis of lipid A, a phosphorylated glycolipid that anchors the lipopolysaccharide to the outer membrane of the cell. This Campylobacter lari (strain RM2100 / D67 / ATCC BAA-1060) protein is Acyl-[acyl-carrier-protein]--UDP-N-acetylglucosamine O-acyltransferase.